An 87-amino-acid chain; its full sequence is Putative phytosulfokines 4 (87 aa).

The signal sequence occupies residues 1-23; the sequence is MANLSTLITIALLLCATMLTCSA. Positions 24–77 are excised as a propeptide; it reads RPEPAYFASFTTSPADTLSLEMIESKLHEVAGESCDKEDDEDCLVRRTLTAHLD. Residues Tyr78 and Tyr80 each carry the sulfotyrosine modification. The propeptide occupies 83 to 87; the sequence is KNNHH.

This sequence belongs to the phytosulfokine family. Sulfation is important for activity and for the binding to a putative membrane receptor.

The protein localises to the secreted. Promotes plant cell differentiation, organogenesis and somatic embryogenesis as well as cell proliferation. The protein is Putative phytosulfokines 4 (PSK4) of Arabidopsis thaliana (Mouse-ear cress).